The following is a 313-amino-acid chain: Porphobilinogen deaminase (313 aa).

C242 is subject to S-(dipyrrolylmethanemethyl)cysteine.

This sequence belongs to the HMBS family. Monomer. It depends on dipyrromethane as a cofactor.

The enzyme catalyses 4 porphobilinogen + H2O = hydroxymethylbilane + 4 NH4(+). Its pathway is porphyrin-containing compound metabolism; protoporphyrin-IX biosynthesis; coproporphyrinogen-III from 5-aminolevulinate: step 2/4. Tetrapolymerization of the monopyrrole PBG into the hydroxymethylbilane pre-uroporphyrinogen in several discrete steps. This Salmonella dublin (strain CT_02021853) protein is Porphobilinogen deaminase.